We begin with the raw amino-acid sequence, 532 residues long: MESAEPAGQARAAATKLSEAVGAALQEPRRQRRLVLVIVCVALLLDNMLYMVIVPIVPDYIAHMRGGGEGPTRTPEVWEPTLPLPTPANASAYTANTSASPTAAWPAGSALRPRYPTESEDVKIGVLFASKAILQLLVNPLSGPFIDRMSYDVPLLIGLGVMFASTVLFAFAEDYATLFAARSLQGLGSAFADTSGIAMIADKYPEEPERSRALGVALAFISFGSLVAPPFGGILYEFAGKRVPFLVLAAVSLFDALLLLAVAKPFSAAARARANLPVGTPIHRLMLDPYIAVVAGALTTCNIPLAFLEPTIATWMKHTMAASEWEMGMAWLPAFVPHVLGVYLTVRLAARYPHLQWLYGALGLAVIGASSCIVPACRSFAPLVVSLCGLCFGIALVDTALLPTLAFLVDVRHVSVYGSVYAIADISYSVAYALGPIVAGHIVHSLGFEQLSLGMGLANLLYAPVLLLLRNVGLLTRSRSERDVLLDEPPQGLYDAVRLRERPVSGQDGEPRSPPGPFDACEDDYNYYYTRS.

Over 1–33 (MESAEPAGQARAAATKLSEAVGAALQEPRRQRR) the chain is Cytoplasmic. The helical transmembrane segment at 34-54 (LVLVIVCVALLLDNMLYMVIV) threads the bilayer. Over 55–125 (PIVPDYIAHM…PTESEDVKIG (71 aa)) the chain is Lumenal, vesicle. 2 N-linked (GlcNAc...) asparagine glycosylation sites follow: Asn-89 and Asn-96. The chain crosses the membrane as a helical span at residues 126-146 (VLFASKAILQLLVNPLSGPFI). The Cytoplasmic portion of the chain corresponds to 147 to 152 (DRMSYD). A helical transmembrane segment spans residues 153-173 (VPLLIGLGVMFASTVLFAFAE). Residues 174–182 (DYATLFAAR) lie on the Lumenal, vesicle side of the membrane. A helical transmembrane segment spans residues 183–203 (SLQGLGSAFADTSGIAMIADK). Topologically, residues 204–213 (YPEEPERSRA) are cytoplasmic. Residues 214 to 234 (LGVALAFISFGSLVAPPFGGI) form a helical membrane-spanning segment. Residues 235–242 (LYEFAGKR) lie on the Lumenal, vesicle side of the membrane. A helical transmembrane segment spans residues 243 to 263 (VPFLVLAAVSLFDALLLLAVA). At 264-289 (KPFSAAARARANLPVGTPIHRLMLDP) the chain is on the cytoplasmic side. A helical membrane pass occupies residues 290–310 (YIAVVAGALTTCNIPLAFLEP). The Lumenal, vesicle segment spans residues 311-325 (TIATWMKHTMAASEW). The chain crosses the membrane as a helical span at residues 326–346 (EMGMAWLPAFVPHVLGVYLTV). Topologically, residues 347-356 (RLAARYPHLQ) are cytoplasmic. The helical transmembrane segment at 357 to 377 (WLYGALGLAVIGASSCIVPAC) threads the bilayer. Over 378–388 (RSFAPLVVSLC) the chain is Lumenal, vesicle. The helical transmembrane segment at 389–409 (GLCFGIALVDTALLPTLAFLV) threads the bilayer. The Cytoplasmic segment spans residues 410-422 (DVRHVSVYGSVYA). A helical transmembrane segment spans residues 423–443 (IADISYSVAYALGPIVAGHIV). Residues 444 to 447 (HSLG) lie on the Lumenal, vesicle side of the membrane. The chain crosses the membrane as a helical span at residues 448 to 468 (FEQLSLGMGLANLLYAPVLLL). The Cytoplasmic segment spans residues 469-532 (LRNVGLLTRS…DDYNYYYTRS (64 aa)). Positions 471–532 (NVGLLTRSRS…DDYNYYYTRS (62 aa)) are mediates interaction with SEC14L1. Residues 502–523 (RPVSGQDGEPRSPPGPFDACED) form a disordered region.

Belongs to the major facilitator superfamily. Vesicular transporter family. In terms of assembly, interacts with SEC14L1. In terms of tissue distribution, peripheral and central cholinergic nervous systems.

The protein localises to the cytoplasmic vesicle. It is found in the secretory vesicle. It localises to the synaptic vesicle membrane. It catalyses the reaction acetylcholine(out) + 2 H(+)(in) = acetylcholine(in) + 2 H(+)(out). It carries out the reaction choline(in) + 2 H(+)(out) = choline(out) + 2 H(+)(in). The enzyme catalyses serotonin(in) + 2 H(+)(out) = serotonin(out) + 2 H(+)(in). With respect to regulation, potently inhibited by L-vesamicol, reserpine and tetrabenazine. Functionally, electrogenic antiporter that exchanges one cholinergic neurotransmitter, acetylcholine or choline, with two intravesicular protons across the membrane of synaptic vesicles. Uses the electrochemical proton gradient established by the V-type proton-pump ATPase to store neurotransmitters inside the vesicles prior to their release via exocytosis. Determines cholinergic vesicular quantal size at presynaptic nerve terminals in developing neuro-muscular junctions with an impact on motor neuron differentiation and innervation pattern. Part of forebrain cholinergic system, regulates hippocampal synapse transmissions that underlie spatial memory formation. Can transport serotonin. The polypeptide is Vesicular acetylcholine transporter (SLC18A3) (Homo sapiens (Human)).